The sequence spans 802 residues: Leucine--tRNA ligase (802 aa).

The 'HIGH' region motif lies at 40-51; the sequence is PYPSGAGLHVGH. A 'KMSKS' region motif is present at residues 576–580; the sequence is KMSKS. Position 579 (lysine 579) interacts with ATP.

This sequence belongs to the class-I aminoacyl-tRNA synthetase family.

It localises to the cytoplasm. The catalysed reaction is tRNA(Leu) + L-leucine + ATP = L-leucyl-tRNA(Leu) + AMP + diphosphate. In Bacillus cereus (strain ATCC 14579 / DSM 31 / CCUG 7414 / JCM 2152 / NBRC 15305 / NCIMB 9373 / NCTC 2599 / NRRL B-3711), this protein is Leucine--tRNA ligase.